The chain runs to 246 residues: tRNA (guanine-N(7)-)-methyltransferase (246 aa).

S-adenosyl-L-methionine contacts are provided by E77, E102, D129, and D152. D152 is an active-site residue. Residues K156, D188, and 225–228 contribute to the substrate site; that span reads TKFE.

It belongs to the class I-like SAM-binding methyltransferase superfamily. TrmB family.

The catalysed reaction is guanosine(46) in tRNA + S-adenosyl-L-methionine = N(7)-methylguanosine(46) in tRNA + S-adenosyl-L-homocysteine. The protein operates within tRNA modification; N(7)-methylguanine-tRNA biosynthesis. Catalyzes the formation of N(7)-methylguanine at position 46 (m7G46) in tRNA. The protein is tRNA (guanine-N(7)-)-methyltransferase of Haemophilus influenzae (strain 86-028NP).